Here is a 360-residue protein sequence, read N- to C-terminus: Photosystem II protein D1 (360 aa).

The next 3 helical transmembrane spans lie at Y29 to T46, H118 to L133, and W142 to A156. H118 serves as a coordination point for chlorophyll a. Y126 provides a ligand contact to pheophytin a. [CaMn4O5] cluster contacts are provided by D170 and E189. A helical transmembrane segment spans residues F197–L218. Position 198 (H198) interacts with chlorophyll a. A quinone is bound by residues H215 and S264–F265. H215 lines the Fe cation pocket. H272 contributes to the Fe cation binding site. The chain crosses the membrane as a helical span at residues F274 to M288. 4 residues coordinate [CaMn4O5] cluster: H332, E333, D342, and A344. The propeptide occupies S345–G360.

Belongs to the reaction center PufL/M/PsbA/D family. As to quaternary structure, PSII is composed of 1 copy each of membrane proteins PsbA, PsbB, PsbC, PsbD, PsbE, PsbF, PsbH, PsbI, PsbJ, PsbK, PsbL, PsbM, PsbT, PsbX, PsbY, PsbZ, Psb30/Ycf12, peripheral proteins PsbO, CyanoQ (PsbQ), PsbU, PsbV and a large number of cofactors. It forms dimeric complexes. The cofactor is The D1/D2 heterodimer binds P680, chlorophylls that are the primary electron donor of PSII, and subsequent electron acceptors. It shares a non-heme iron and each subunit binds pheophytin, quinone, additional chlorophylls, carotenoids and lipids. D1 provides most of the ligands for the Mn4-Ca-O5 cluster of the oxygen-evolving complex (OEC). There is also a Cl(-1) ion associated with D1 and D2, which is required for oxygen evolution. The PSII complex binds additional chlorophylls, carotenoids and specific lipids.. In terms of processing, tyr-161 forms a radical intermediate that is referred to as redox-active TyrZ, YZ or Y-Z. C-terminally processed by CtpA; processing is essential to allow assembly of the oxygen-evolving complex and thus photosynthetic growth.

The protein localises to the cellular thylakoid membrane. The catalysed reaction is 2 a plastoquinone + 4 hnu + 2 H2O = 2 a plastoquinol + O2. Functionally, photosystem II (PSII) is a light-driven water:plastoquinone oxidoreductase that uses light energy to abstract electrons from H(2)O, generating O(2) and a proton gradient subsequently used for ATP formation. It consists of a core antenna complex that captures photons, and an electron transfer chain that converts photonic excitation into a charge separation. The D1/D2 (PsbA/PsbD) reaction center heterodimer binds P680, the primary electron donor of PSII as well as several subsequent electron acceptors. In Microcystis aeruginosa, this protein is Photosystem II protein D1.